Here is a 535-residue protein sequence, read N- to C-terminus: Suppressor of cytokine signaling 6 (535 aa).

Residues 80–89 are compositionally biased toward basic residues; that stretch reads RLSAKQKSKG. Residues 80 to 105 are disordered; the sequence is RLSAKQKSKGKAGTPSGSSADEDTFS. An SH2 domain is found at 384–491; that stretch reads WYWGPITRWE…TYPVRLTNPV (108 aa). In terms of domain architecture, SOCS box spans 486 to 535; the sequence is RLTNPVSRFMQVRSLQYLCRFVIRQYTRIDLIQKLPLPNKMKDYLQEKHY.

Interacts with RBCK1. Interacts with phosphorylated IRS4. Interacts with PIM3. Interacts with KIT (phosphorylated).

It functions in the pathway protein modification; protein ubiquitination. Functionally, SOCS family proteins form part of a classical negative feedback system that regulates cytokine signal transduction. May be a substrate recognition component of a SCF-like ECS (Elongin BC-CUL2/5-SOCS-box protein) E3 ubiquitin-protein ligase complex which mediates the ubiquitination and subsequent proteasomal degradation of target proteins. Regulates KIT degradation by ubiquitination of the tyrosine-phosphorylated receptor. The protein is Suppressor of cytokine signaling 6 (SOCS6) of Homo sapiens (Human).